The sequence spans 352 residues: Selenide, water dikinase (352 aa).

Residue C23 is part of the active site. ATP is bound by residues K26 and 54-56; that span reads SRD. Residue D57 coordinates Mg(2+). ATP is bound by residues D74, D97, and 145–147; that span reads GHS. D97 contacts Mg(2+). A Mg(2+)-binding site is contributed by D233.

This sequence belongs to the selenophosphate synthase 1 family. Class I subfamily. Homodimer. Mg(2+) serves as cofactor.

The enzyme catalyses hydrogenselenide + ATP + H2O = selenophosphate + AMP + phosphate + 2 H(+). Functionally, synthesizes selenophosphate from selenide and ATP. This is Selenide, water dikinase from Shewanella sp. (strain MR-4).